We begin with the raw amino-acid sequence, 317 residues long: Proline iminopeptidase (317 aa).

The 256-residue stretch at 41-296 (VFIHGGPGGG…ELHIVEGAGH (256 aa)) folds into the AB hydrolase-1 domain. The active-site Nucleophile is the serine 113. Aspartate 268 is an active-site residue. Histidine 296 (proton donor) is an active-site residue.

This sequence belongs to the peptidase S33 family. Monomer.

Its subcellular location is the cytoplasm. It carries out the reaction Release of N-terminal proline from a peptide.. Functionally, specifically catalyzes the removal of N-terminal proline residues from peptides. This is Proline iminopeptidase (pip) from Serratia marcescens.